Here is a 524-residue protein sequence, read N- to C-terminus: Probable serine/threonine-protein kinase WNK10 (524 aa).

The Protein kinase domain occupies 16 to 273 (IRYNDVLGRG…ALELLKDQLL (258 aa)). Residues 96 to 99 (TELF) and K146 each bind ATP. D163 acts as the Proton acceptor in catalysis. A Phosphoserine modification is found at S477. Positions 480–523 (SNKQSEDLKTELNVIESQYNQSCQRLLRMKEEAIEKAKRKWMKL) form a coiled coil.

This sequence belongs to the protein kinase superfamily. Ser/Thr protein kinase family. WNK subfamily.

The catalysed reaction is L-seryl-[protein] + ATP = O-phospho-L-seryl-[protein] + ADP + H(+). The enzyme catalyses L-threonyl-[protein] + ATP = O-phospho-L-threonyl-[protein] + ADP + H(+). May regulate flowering time by modulating the photoperiod pathway. In Arabidopsis thaliana (Mouse-ear cress), this protein is Probable serine/threonine-protein kinase WNK10 (WNK10).